A 785-amino-acid chain; its full sequence is Sexual differentiation process protein isp4 (785 aa).

Residues 1 to 28 (MIGSINESPIEEHMNDSPSTKEKADSVD) form a disordered region. The span at 10 to 26 (IEEHMNDSPSTKEKADS) shows a compositional bias: basic and acidic residues. 16 helical membrane passes run 94 to 114 (MWTI…FFSL), 121 to 141 (LSVL…DLIF), 167 to 187 (LIVV…IILA), 196 to 216 (FGFG…YGLA), 264 to 284 (FFLY…YIFQ), 339 to 359 (LMNI…ALNF), 413 to 433 (ALAF…VILY), 461 to 481 (VPFY…MGTI), 490 to 510 (WWVI…IGIV), 512 to 532 (AITN…GYMY), 537 to 557 (LAMM…LAFA), 572 to 592 (IMFY…IGVL), 611 to 631 (YTCP…VIGP), 642 to 662 (TGLQ…WALW), 683 to 703 (GYIP…GLFF), and 732 to 752 (LSVI…PDWW).

The protein belongs to the oligopeptide OPT transporter family.

The protein localises to the endoplasmic reticulum membrane. The protein is Sexual differentiation process protein isp4 (isp4) of Schizosaccharomyces pombe (strain 972 / ATCC 24843) (Fission yeast).